Reading from the N-terminus, the 94-residue chain is MNKDKLRYAILKEIFEGNTPLSENDIGVTEDQFDDAVNFLKREGYIIGVHYSDDRPHLYKLGPELTEKGENYLKENGTWSKAYKTIKEIKDWIK.

This is an uncharacterized protein from Bacillus subtilis (strain 168).